We begin with the raw amino-acid sequence, 205 residues long: Inactive ribonuclease-like protein 9 (205 aa).

The signal sequence occupies residues 1 to 24 (MMLITTHSLLLLLLLLQLLQPLQF). Intrachain disulfides connect C97-C152, C115-C167, and C122-C129. N130 and N142 each carry an N-linked (GlcNAc...) asparagine glycan.

The protein belongs to the pancreatic ribonuclease family.

The protein localises to the secreted. In terms of biological role, does not exhibit any ribonuclease activity. This Cebus capucinus (White-faced sapajou) protein is Inactive ribonuclease-like protein 9 (RNASE9).